Consider the following 453-residue polypeptide: Cytochrome b-c1 complex subunit 2, mitochondrial (453 aa).

Residues 1-14 (MKLLTRAGSFSRFY) constitute a mitochondrion transit peptide. An N6-acetyllysine mark is found at Lys66, Lys199, and Lys250.

It belongs to the peptidase M16 family. UQCRC2/QCR2 subfamily. As to quaternary structure, component of the ubiquinol-cytochrome c oxidoreductase (cytochrome b-c1 complex, complex III, CIII), a multisubunit enzyme composed of 11 subunits. The complex is composed of 3 respiratory subunits cytochrome b, cytochrome c1 and Rieske protein UQCRFS1, 2 core protein subunits UQCRC1/QCR1 and UQCRC2/QCR2, and 6 low-molecular weight protein subunits UQCRH/QCR6, UQCRB/QCR7, UQCRQ/QCR8, UQCR10/QCR9, UQCR11/QCR10 and subunit 9, the cleavage product of Rieske protein UQCRFS1. The complex exists as an obligatory dimer and forms supercomplexes (SCs) in the inner mitochondrial membrane with NADH-ubiquinone oxidoreductase (complex I, CI) and cytochrome c oxidase (complex IV, CIV), resulting in different assemblies (supercomplex SCI(1)III(2)IV(1) and megacomplex MCI(2)III(2)IV(2)). Interacts with RAB5IF. Interacts with STMP1.

The protein resides in the mitochondrion inner membrane. In terms of biological role, component of the ubiquinol-cytochrome c oxidoreductase, a multisubunit transmembrane complex that is part of the mitochondrial electron transport chain which drives oxidative phosphorylation. The respiratory chain contains 3 multisubunit complexes succinate dehydrogenase (complex II, CII), ubiquinol-cytochrome c oxidoreductase (cytochrome b-c1 complex, complex III, CIII) and cytochrome c oxidase (complex IV, CIV), that cooperate to transfer electrons derived from NADH and succinate to molecular oxygen, creating an electrochemical gradient over the inner membrane that drives transmembrane transport and the ATP synthase. The cytochrome b-c1 complex catalyzes electron transfer from ubiquinol to cytochrome c, linking this redox reaction to translocation of protons across the mitochondrial inner membrane, with protons being carried across the membrane as hydrogens on the quinol. In the process called Q cycle, 2 protons are consumed from the matrix, 4 protons are released into the intermembrane space and 2 electrons are passed to cytochrome c. The 2 core subunits UQCRC1/QCR1 and UQCRC2/QCR2 are homologous to the 2 mitochondrial-processing peptidase (MPP) subunits beta-MPP and alpha-MPP respectively, and they seem to have preserved their MPP processing properties. May be involved in the in situ processing of UQCRFS1 into the mature Rieske protein and its mitochondrial targeting sequence (MTS)/subunit 9 when incorporated into complex III. The chain is Cytochrome b-c1 complex subunit 2, mitochondrial (UQCRC2) from Homo sapiens (Human).